The following is a 95-amino-acid chain: Small ribosomal subunit protein uS19 (95 aa).

This sequence belongs to the universal ribosomal protein uS19 family.

Protein S19 forms a complex with S13 that binds strongly to the 16S ribosomal RNA. This Syntrophobacter fumaroxidans (strain DSM 10017 / MPOB) protein is Small ribosomal subunit protein uS19.